The chain runs to 236 residues: Purine nucleoside phosphorylase DeoD-type 1 (236 aa).

A purine D-ribonucleoside is bound at residue His5. Phosphate contacts are provided by residues Gly21, Arg25, Arg44, and 88-91 (RVGS). A purine D-ribonucleoside contacts are provided by residues 180-182 (EME) and 204-205 (TD). Asp205 functions as the Proton donor in the catalytic mechanism.

Belongs to the PNP/UDP phosphorylase family. Homohexamer; trimer of homodimers.

It carries out the reaction a purine D-ribonucleoside + phosphate = a purine nucleobase + alpha-D-ribose 1-phosphate. The catalysed reaction is a purine 2'-deoxy-D-ribonucleoside + phosphate = a purine nucleobase + 2-deoxy-alpha-D-ribose 1-phosphate. Its function is as follows. Catalyzes the reversible phosphorolytic breakdown of the N-glycosidic bond in the beta-(deoxy)ribonucleoside molecules, with the formation of the corresponding free purine bases and pentose-1-phosphate. This Shewanella oneidensis (strain ATCC 700550 / JCM 31522 / CIP 106686 / LMG 19005 / NCIMB 14063 / MR-1) protein is Purine nucleoside phosphorylase DeoD-type 1.